A 344-amino-acid chain; its full sequence is Phenylalanine--tRNA ligase alpha subunit (344 aa).

Residue glutamate 256 participates in Mg(2+) binding.

It belongs to the class-II aminoacyl-tRNA synthetase family. Phe-tRNA synthetase alpha subunit type 1 subfamily. Tetramer of two alpha and two beta subunits. Mg(2+) is required as a cofactor.

It localises to the cytoplasm. The catalysed reaction is tRNA(Phe) + L-phenylalanine + ATP = L-phenylalanyl-tRNA(Phe) + AMP + diphosphate + H(+). The sequence is that of Phenylalanine--tRNA ligase alpha subunit from Bacillus cytotoxicus (strain DSM 22905 / CIP 110041 / 391-98 / NVH 391-98).